A 276-amino-acid chain; its full sequence is UPF0328 protein ECU08_2080 (276 aa).

Residues 1–24 (MGIIDVQRSHLTATPSKERDAPAH) are disordered.

The protein belongs to the UPF0328 family.

The polypeptide is UPF0328 protein ECU08_2080 (Encephalitozoon cuniculi (strain GB-M1) (Microsporidian parasite)).